We begin with the raw amino-acid sequence, 62 residues long: MAACKDAVKVKTLSGKEVELVPKKVWQLSPKGRKGVKVGLFQDPETGKYFRAKVPDDYPICG.

This sequence belongs to the Cren7 family. Monomer. In terms of processing, methylated at multiple sites, to varying extents.

The protein resides in the chromosome. The protein localises to the cytoplasm. Functionally, a chromatin protein, binds double-stranded DNA without sequence specificity. Constrains negative DNA supercoils. This chain is Chromatin protein Cren7, found in Staphylothermus marinus (strain ATCC 43588 / DSM 3639 / JCM 9404 / F1).